The primary structure comprises 186 residues: Mitoferrin-2B (186 aa).

A Solcar repeat occupies 75-163 (SNVTAHMLAG…FACYEKLKKT (89 aa)). 3 helical membrane passes run 77 to 96 (VTAH…CLMY), 137 to 157 (RGLN…FACY), and 172 to 185 (GNCH…NSCP).

Belongs to the mitochondrial carrier (TC 2.A.29) family.

The protein resides in the mitochondrion inner membrane. The enzyme catalyses Fe(2+)(in) = Fe(2+)(out). In terms of biological role, mitochondrial iron transporter that mediates iron uptake. Probably required for heme synthesis of hemoproteins and Fe-S cluster assembly in non-erythroid cells. The protein is Mitoferrin-2B (slc25a28-b) of Xenopus laevis (African clawed frog).